A 372-amino-acid chain; its full sequence is MHC class I-like protein MILL2 (372 aa).

The N-terminal stretch at 1–26 is a signal peptide; the sequence is MEASSGTAGPAVLLLILALLLTESQG. The alpha-1 stretch occupies residues 28 to 119; that stretch reads RSQGTHTLRY…MINQKGHDKG (92 aa). Intrachain disulfides connect Cys-78–Cys-89, Cys-129–Cys-191, and Cys-230–Cys-287. Residues 120–210 are alpha-2; the sequence is PYTLQATLDC…SLSNVLPDTG (91 aa). N-linked (GlcNAc...) asparagine glycosylation is found at Asn-134, Asn-234, and Asn-293. The Ig-like C1-type domain occupies 192 to 302; sequence PARLQRHLAS…NRTIMQTAVS (111 aa). Residues 211–339 form an alpha-3 region; the sequence is SPVVIVTCRN…VVDGGLVTGN (129 aa). The segment at 308–349 is disordered; that stretch reads WPSASWATRQEAEGPHRTHNDHVVDGGLVTGNANKDSPDASS. A compositionally biased stretch (basic and acidic residues) spans 317–331; it reads QEAEGPHRTHNDHVV. A connecting peptide region spans residues 340–348; that stretch reads ANKDSPDAS. The GPI-anchor amidated serine moiety is linked to residue Ser-349. Positions 350-372 are cleaved as a propeptide — removed in mature form; sequence CATASAISAFPVVVLSVALPRAN.

This sequence belongs to the MHC class I family. In terms of assembly, heterodimer with B2M. As to expression, ubiquitously expressed in neonatal and adult tissues.

It is found in the cell membrane. In terms of biological role, binds to heparan sulfate proteoglycans on the surface of fibroblast cells. The protein is MHC class I-like protein MILL2 of Rattus norvegicus (Rat).